The chain runs to 338 residues: MGAKIKIGINGFGRIGRLVARVALKRDDVELVAVNDPFITTDYMTYMFKYDSVHGQWKNDELTVKDSNTLLFGQKPVTVFAHRNPEEIPWASTGADIIVESTGVFTDKDKAAAHLKGGAKKVIISAPSKDAPMFVVGVNENEYKPEFDIISNASCTTNCLAPLAKVINDRFGIVEGLMTTVHSITATQKTVDGPSSKDWRGGRAASFNIIPSSTGAAKAVGKVLPALNGKLTGMSFRVPTVDVSVVDLTVRLEKAATYDEIKAAIKEESEGKLKGILGYTEDDVVSTDFIGDTRSSIFDAKAGIALNDKFVKLVSWYDNELGYSTRVVDLIVHIAKQL.

NAD(+) contacts are provided by residues 14–15 (RI), Asp36, and Arg83. D-glyceraldehyde 3-phosphate is bound by residues 154–156 (SCT), Thr185, 214–215 (TG), and Arg237. Catalysis depends on Cys155, which acts as the Nucleophile. Asn319 contributes to the NAD(+) binding site.

It belongs to the glyceraldehyde-3-phosphate dehydrogenase family. Homotetramer.

The protein localises to the cytoplasm. It carries out the reaction D-glyceraldehyde 3-phosphate + phosphate + NAD(+) = (2R)-3-phospho-glyceroyl phosphate + NADH + H(+). It functions in the pathway carbohydrate degradation; glycolysis; pyruvate from D-glyceraldehyde 3-phosphate: step 1/5. In terms of biological role, key enzyme in glycolysis that catalyzes the first step of the pathway by converting D-glyceraldehyde 3-phosphate (G3P) into 3-phospho-D-glyceroyl phosphate. Essential for the maintenance of cellular ATP levels and carbohydrate metabolism. The chain is Glyceraldehyde-3-phosphate dehydrogenase, cytosolic (GAPC1) from Pisum sativum (Garden pea).